Here is a 129-residue protein sequence, read N- to C-terminus: Protein Turandot C (129 aa).

Positions 1–21 (MNASISLLCLALLLISPFCLG) are cleaved as a signal peptide.

The protein belongs to the Turandot family.

It is found in the secreted. A humoral factor that may play a role in stress tolerance. This Drosophila melanogaster (Fruit fly) protein is Protein Turandot C.